Reading from the N-terminus, the 606-residue chain is NADH-ubiquinone oxidoreductase chain 5 (606 aa).

The next 16 helical transmembrane spans lie at 1–21 (MNPF…PIMM), 43–63 (AFTL…EMII), 87–107 (VMFI…SMWY), 112–132 (PFIN…MILV), 137–157 (LFQL…LIGW), 171–191 (AILY…WFLT), 213–233 (LIGL…HPWL), 241–261 (TPVS…FLLI), 273–293 (VQTM…LCAI), 301–321 (IVAF…GINQ), 324–344 (LAFL…MCSG), 366–386 (MPFT…MPYL), 407–429 (WALL…IIFF), 457–477 (LLIG…PMTV), 482–502 (MPLY…MLAL), and 582–602 (GLIK…MTLF).

Belongs to the complex I subunit 5 family. In terms of assembly, core subunit of respiratory chain NADH dehydrogenase (Complex I) which is composed of 45 different subunits.

The protein localises to the mitochondrion inner membrane. The enzyme catalyses a ubiquinone + NADH + 5 H(+)(in) = a ubiquinol + NAD(+) + 4 H(+)(out). Its function is as follows. Core subunit of the mitochondrial membrane respiratory chain NADH dehydrogenase (Complex I) which catalyzes electron transfer from NADH through the respiratory chain, using ubiquinone as an electron acceptor. Essential for the catalytic activity and assembly of complex I. The chain is NADH-ubiquinone oxidoreductase chain 5 (MT-ND5) from Sus scrofa (Pig).